The chain runs to 308 residues: Putative proline iminopeptidase (308 aa).

The AB hydrolase-1 domain maps to 30–290 (KPVLYIHGGP…LYVTNNAGHS (261 aa)). The active-site Nucleophile is the S105. The active site involves D261. Residue H289 is the Proton donor of the active site.

It belongs to the peptidase S33 family.

The protein localises to the cytoplasm. It catalyses the reaction Release of N-terminal proline from a peptide.. Specifically catalyzes the removal of N-terminal proline residues from peptides. This is Putative proline iminopeptidase (pip) from Mycoplasma genitalium (strain ATCC 33530 / DSM 19775 / NCTC 10195 / G37) (Mycoplasmoides genitalium).